A 226-amino-acid polypeptide reads, in one-letter code: MAFRNPIYQLSNTEDLNLDIINAPSLENSRRSSATLAVCTTEDSKFLYGTTPSGGAEWCSEGINSVRPSKRLLRRRRHVPRWISDSFRTCLPKSSGNLKEQALQPSLDRNPCRNGQADEALRNKRIGIAEPSNYWHGIIEETYDEHHQRQRNLHLIPENWQDVNLKNGLVAIIDLATDHLQCSKLIIYVDKHLPNLPYLVKSFHWVGFEPIAHPNCVDHAVFGMDL.

This sequence belongs to the ODC antizyme family. As to quaternary structure, interacts with ODC and thereby sterically blocks ODC homodimerization.

Its function is as follows. Ornithine decarboxylase (ODC) antizyme protein that negatively regulates ODC activity and intracellular polyamine biosynthesis in response to increased intracellular polyamine levels. Binds to ODC monomers, inhibiting the assembly of the functional ODC homodimer, and targets the monomers for ubiquitin-independent proteolytic destruction by the 26S proteasome. This chain is Ornithine decarboxylase antizyme (spa1), found in Schizosaccharomyces japonicus (Fission yeast).